We begin with the raw amino-acid sequence, 257 residues long: Pyridoxine 5'-phosphate synthase (257 aa).

Residue asparagine 6 participates in 3-amino-2-oxopropyl phosphate binding. 8–9 contributes to the 1-deoxy-D-xylulose 5-phosphate binding site; the sequence is DH. 3-amino-2-oxopropyl phosphate is bound at residue arginine 17. The active-site Proton acceptor is histidine 42. 1-deoxy-D-xylulose 5-phosphate-binding residues include arginine 44 and histidine 49. Catalysis depends on glutamate 69, which acts as the Proton acceptor. Residue threonine 99 participates in 1-deoxy-D-xylulose 5-phosphate binding. Catalysis depends on histidine 211, which acts as the Proton donor. 3-amino-2-oxopropyl phosphate is bound by residues glycine 212 and 233-234; that span reads GQ.

Belongs to the PNP synthase family. Homooctamer; tetramer of dimers.

It localises to the cytoplasm. It catalyses the reaction 3-amino-2-oxopropyl phosphate + 1-deoxy-D-xylulose 5-phosphate = pyridoxine 5'-phosphate + phosphate + 2 H2O + H(+). The protein operates within cofactor biosynthesis; pyridoxine 5'-phosphate biosynthesis; pyridoxine 5'-phosphate from D-erythrose 4-phosphate: step 5/5. Its function is as follows. Catalyzes the complicated ring closure reaction between the two acyclic compounds 1-deoxy-D-xylulose-5-phosphate (DXP) and 3-amino-2-oxopropyl phosphate (1-amino-acetone-3-phosphate or AAP) to form pyridoxine 5'-phosphate (PNP) and inorganic phosphate. The sequence is that of Pyridoxine 5'-phosphate synthase from Campylobacter hominis (strain ATCC BAA-381 / DSM 21671 / CCUG 45161 / LMG 19568 / NCTC 13146 / CH001A).